Reading from the N-terminus, the 374-residue chain is MSAIRYELIKKCKQSGARLGRVYTPHGCFDTPAFMPVGTQATVKGMSPDEMKEIEAQIILSNTYHLHMRPGEDIVKEAGGLHGFMNWDRPILTDSGGFQVFSLSDLRDIKEEGVTFKSHIDGSKHFISPEMAIKIQNDLGADIIMAFDECIPYPADYDYAKKSLERTTRWAKRCKDAHRNPEKQALFGIVQGGMYKDLRQQSAYELLELDFPGYAIGGLSVGEPAEIMYEMLEVTVPLLPEDKPRYLMGVGSPDYLIEGATRGIDMFDCVLPTRIGRNGTVLTSKGRIIVRDAIYARDYTPIDPECDCYACRNFTRAYIRHLLKSGEVLGIRLTTWHNLRFLINLMKKVRQAIMEDRLLDFRDEFFSKFGYKKI.

Asp-94 acts as the Proton acceptor in catalysis. Substrate is bound by residues 94 to 98 (DSGGF), Asp-148, Gln-191, and Gly-218. An RNA binding region spans residues 249–255 (GVGSPDY). Asp-268 acts as the Nucleophile in catalysis. The RNA binding; important for wobble base 34 recognition stretch occupies residues 273–277 (TRIGR). Zn(2+)-binding residues include Cys-306, Cys-308, Cys-311, and His-337.

It belongs to the queuine tRNA-ribosyltransferase family. Homodimer. Within each dimer, one monomer is responsible for RNA recognition and catalysis, while the other monomer binds to the replacement base PreQ1. The cofactor is Zn(2+).

It carries out the reaction 7-aminomethyl-7-carbaguanine + guanosine(34) in tRNA = 7-aminomethyl-7-carbaguanosine(34) in tRNA + guanine. The protein operates within tRNA modification; tRNA-queuosine biosynthesis. Catalyzes the base-exchange of a guanine (G) residue with the queuine precursor 7-aminomethyl-7-deazaguanine (PreQ1) at position 34 (anticodon wobble position) in tRNAs with GU(N) anticodons (tRNA-Asp, -Asn, -His and -Tyr). Catalysis occurs through a double-displacement mechanism. The nucleophile active site attacks the C1' of nucleotide 34 to detach the guanine base from the RNA, forming a covalent enzyme-RNA intermediate. The proton acceptor active site deprotonates the incoming PreQ1, allowing a nucleophilic attack on the C1' of the ribose to form the product. After dissociation, two additional enzymatic reactions on the tRNA convert PreQ1 to queuine (Q), resulting in the hypermodified nucleoside queuosine (7-(((4,5-cis-dihydroxy-2-cyclopenten-1-yl)amino)methyl)-7-deazaguanosine). This Acetivibrio thermocellus (strain ATCC 27405 / DSM 1237 / JCM 9322 / NBRC 103400 / NCIMB 10682 / NRRL B-4536 / VPI 7372) (Clostridium thermocellum) protein is Queuine tRNA-ribosyltransferase.